The primary structure comprises 142 residues: Deoxyuridine 5'-triphosphate nucleotidohydrolase (142 aa).

Substrate is bound by residues 62–64 (RSG), N75, 79–81 (TID), and K89.

This sequence belongs to the dUTPase family. The cofactor is Mg(2+).

The enzyme catalyses dUTP + H2O = dUMP + diphosphate + H(+). Its pathway is pyrimidine metabolism; dUMP biosynthesis; dUMP from dCTP (dUTP route): step 2/2. This enzyme is involved in nucleotide metabolism: it produces dUMP, the immediate precursor of thymidine nucleotides and it decreases the intracellular concentration of dUTP so that uracil cannot be incorporated into DNA. The protein is Deoxyuridine 5'-triphosphate nucleotidohydrolase of Nautilia profundicola (strain ATCC BAA-1463 / DSM 18972 / AmH).